Reading from the N-terminus, the 360-residue chain is Venom serine protease Bi-VSP (360 aa).

Positions 1–26 are cleaved as a signal peptide; sequence MTGSKMLFACLALIAFLHPLVHVASA. Positions 27–113 are excised as a propeptide; sequence QECTTPNNKA…CGFSNVSHTR (87 aa). A Clip domain is found at 28–79; the sequence is ECTTPNNKAGKCLGIRVCKPLLEMLQTQGHAAADFLRQSVCKYENNNPIVCC. 7 disulfides stabilise this stretch: C29–C78, C39–C68, C45–C79, C104–C230, C147–C163, C278–C296, and C307–C335. A glycan (N-linked (GlcNAc...) asparagine) is linked at N108. Residues 114–360 enclose the Peptidase S1 domain; sequence VVGGKPAVLG…LDDFILPAMQ (247 aa). The Charge relay system role is filled by H162. Residues D176, N178, R181, and D184 each contribute to the Ca(2+) site. D210 acts as the Charge relay system in catalysis. S311 functions as the Charge relay system in the catalytic mechanism.

Belongs to the peptidase S1 family. CLIP subfamily. As to expression, expressed by the venom gland.

It localises to the secreted. Its function is as follows. Multifunctional venom serine protease. In insects, it acts as an arthropod prophenoloxidase-activating factor, thereby triggering the phenoloxidase cascade. When injected into larvae, it induces a lethal melanization response in target insects by modulating the innate immune response. In mammals, it converts fibrinogen into fibrin, activates prothrombin, and also degrades fibrin. In mammal, it may act in a cooperative manner with the serine protease inhibitor Bi-KTI (AC G3LH89) to promote the spread of bee venom under anti-bleeding conditions. This chain is Venom serine protease Bi-VSP, found in Bombus ignitus (Bumblebee).